The chain runs to 127 residues: Large ribosomal subunit protein bL12 (127 aa).

It belongs to the bacterial ribosomal protein bL12 family. Homodimer. Part of the ribosomal stalk of the 50S ribosomal subunit. Forms a multimeric L10(L12)X complex, where L10 forms an elongated spine to which 2 to 4 L12 dimers bind in a sequential fashion. Binds GTP-bound translation factors.

In terms of biological role, forms part of the ribosomal stalk which helps the ribosome interact with GTP-bound translation factors. Is thus essential for accurate translation. The chain is Large ribosomal subunit protein bL12 from Symbiobacterium thermophilum (strain DSM 24528 / JCM 14929 / IAM 14863 / T).